Consider the following 104-residue polypeptide: Large ribosomal subunit protein bL27 (104 aa).

Positions 1-15 are excised as a propeptide; it reads MNNKYFLTKIDLQFF.

It belongs to the bacterial ribosomal protein bL27 family. Post-translationally, the N-terminus is cleaved by ribosomal processing cysteine protease Prp.

The sequence is that of Large ribosomal subunit protein bL27 from Mycoplasma pneumoniae (strain ATCC 29342 / M129 / Subtype 1) (Mycoplasmoides pneumoniae).